Reading from the N-terminus, the 645-residue chain is Putative palmitoyltransferase ZDHHC13 (645 aa).

A disordered region spans residues 1 to 73 (MDWSEGDGSH…KSSHPEDSSS (73 aa)). At 1 to 314 (MDWSEGDGSH…ACLKLLNRYK (314 aa)) the chain is on the cytoplasmic side. The segment covering 7 to 20 (DGSHSHGHMGDSCH) has biased composition (basic and acidic residues). Positions 23 to 33 (GGGHSHGHGHS) are enriched in basic residues. Residues 34-43 (HGGSGFGGFM) are compositionally biased toward gly residues. ANK repeat units lie at residues 104 to 133 (ENVT…VIDQ), 138 to 167 (LNST…DPSL), 171 to 200 (EGYR…EVDL), 204 to 234 (NGQT…SVNA), and 239 to 268 (NRNS…SVDM). A helical transmembrane segment spans residues 315–335 (VCLQSVFSVVVVGAFGAILDM). A topological domain (lumenal) is located at residue Arg-336. A helical transmembrane segment spans residues 337–357 (TESWLLKGILLACIMAVINLA). Residues 358 to 369 (SRQLATVAVRSL) are Cytoplasmic-facing. Residues 370–390 (IPSTGLIASVFWMVVTWVLWF) traverse the membrane as a helical segment. Residues 391–394 (LPDE) are Lumenal-facing. Residues 395-415 (PSAAVQMLFTVNITAVLYYYI) traverse the membrane as a helical segment. Residues 416–492 (RSCRTDPGHV…NGCIGARNHP (77 aa)) are Cytoplasmic-facing. The 51-residue stretch at 449 to 499 (IFCTSCMMRKPMRANHCFSCNACVAKQDHHSIWINGCIGARNHPFFVLFLV) folds into the DHHC domain. Residues 493–513 (FFVLFLVALNFLCIWMFYGSI) form a helical membrane-spanning segment. Topologically, residues 514–542 (TYWSRHCPLHYSEEGIWGALTALMGCSPW) are lumenal. The helical transmembrane segment at 543–563 (LLYVFCFVFFHTTWASILLVL) threads the bilayer. Residues 564–645 (QLYQIAFLGL…RDMFSSPDAV (82 aa)) lie on the Cytoplasmic side of the membrane.

This sequence belongs to the DHHC palmitoyltransferase family. AKR/ZDHHC17 subfamily.

It localises to the golgi apparatus membrane. The protein resides in the cytoplasmic vesicle membrane. In terms of biological role, putative palmitoyltransferase that could catalyze the addition of palmitate onto various protein substrates. The chain is Putative palmitoyltransferase ZDHHC13 from Danio rerio (Zebrafish).